Consider the following 308-residue polypeptide: Aspartate carbamoyltransferase catalytic subunit (308 aa).

Residues arginine 57 and threonine 58 each contribute to the carbamoyl phosphate site. Lysine 86 lines the L-aspartate pocket. Carbamoyl phosphate-binding residues include arginine 107, histidine 135, and glutamine 138. Positions 168 and 229 each coordinate L-aspartate. Leucine 268 and proline 269 together coordinate carbamoyl phosphate.

The protein belongs to the aspartate/ornithine carbamoyltransferase superfamily. ATCase family. Heterooligomer of catalytic and regulatory chains.

The enzyme catalyses carbamoyl phosphate + L-aspartate = N-carbamoyl-L-aspartate + phosphate + H(+). It functions in the pathway pyrimidine metabolism; UMP biosynthesis via de novo pathway; (S)-dihydroorotate from bicarbonate: step 2/3. In terms of biological role, catalyzes the condensation of carbamoyl phosphate and aspartate to form carbamoyl aspartate and inorganic phosphate, the committed step in the de novo pyrimidine nucleotide biosynthesis pathway. This Thermococcus gammatolerans (strain DSM 15229 / JCM 11827 / EJ3) protein is Aspartate carbamoyltransferase catalytic subunit.